A 1837-amino-acid polypeptide reads, in one-letter code: Nucleoporin nup211 (1837 aa).

Coiled coils occupy residues Glu-59 to Ile-378, Tyr-415 to Leu-519, and Val-559 to Tyr-625. Thr-650 carries the phosphothreonine modification. Coiled-coil stretches lie at residues Glu-661–Leu-1163, Leu-1222–His-1637, and Lys-1675–Thr-1712. The segment at Lys-1464–Thr-1521 is disordered. Residues His-1468–Glu-1479 are compositionally biased toward polar residues. Positions Gln-1480–Thr-1521 are enriched in basic and acidic residues. Phosphoserine is present on Ser-1558. Residue Thr-1560 is modified to Phosphothreonine. The residue at position 1563 (Ser-1563) is a Phosphoserine. 2 disordered regions span residues Glu-1602 to Asp-1642 and Glu-1700 to Lys-1837. Over residues Lys-1617–Ala-1628 the composition is skewed to basic and acidic residues. 4 stretches are compositionally biased toward polar residues: residues Glu-1700 to Thr-1730, Lys-1753 to Gly-1763, Ile-1795 to Ser-1814, and Gly-1827 to Lys-1837.

It is found in the cytoplasm. The protein resides in the nucleus. Its function is as follows. Functions as a component of the nuclear pore complex (NPC). NPC components, collectively referred to as nucleoporins (NUPs), can play the role of both NPC structural components and of docking or interaction partners for transiently associated nuclear transport factors. Active directional transport is assured by both, a Phe-Gly (FG) repeat affinity gradient for these transport factors across the NPC and a transport cofactor concentration gradient across the nuclear envelope. The protein is Nucleoporin nup211 (nup211) of Schizosaccharomyces pombe (strain 972 / ATCC 24843) (Fission yeast).